The following is a 474-amino-acid chain: AAA-ATPase At3g28610 (474 aa).

Positions 1–25 (MMGNMFGSSLASLFFLWATIQQIFP) are cleaved as a signal peptide. Residue 244-251 (GPPGTGKS) coordinates ATP.

It belongs to the AAA ATPase family. BCS1 subfamily. Mg(2+) serves as cofactor.

It carries out the reaction ATP + H2O = ADP + phosphate + H(+). The protein is AAA-ATPase At3g28610 of Arabidopsis thaliana (Mouse-ear cress).